We begin with the raw amino-acid sequence, 115 residues long: Nitrogenase-stabilizing/protective protein NifW (115 aa).

This sequence belongs to the NifW family. Homotrimer; associates with NifD.

Its function is as follows. May protect the nitrogenase Fe-Mo protein from oxidative damage. This chain is Nitrogenase-stabilizing/protective protein NifW, found in Stutzerimonas stutzeri (strain A1501) (Pseudomonas stutzeri).